The chain runs to 297 residues: Transmembrane protein 178A (297 aa).

Positions 1 to 25 (MEPRALVTALSLGLSLCSLGLLVTA) are cleaved as a signal peptide. Topologically, residues 26 to 179 (IFTDHWYETD…LLHLRRITAG (154 aa)) are extracellular. A compositionally biased stretch (basic and acidic residues) spans 41 to 57 (ESCERSRAGADPPDQKN). Residues 41–86 (ESCERSRAGADPPDQKNRLMPLSHLPLRDSPPLGRRLLPGGPGRSD) form a disordered region. Positions 68 to 79 (RDSPPLGRRLLP) are enriched in low complexity. N-linked (GlcNAc...) asparagine glycosylation is present at Asn158. A helical transmembrane segment spans residues 180–200 (FLGMAVAVLLCGCIVATVSFF). Topologically, residues 201-208 (WEESLTQH) are cytoplasmic. The chain crosses the membrane as a helical span at residues 209 to 229 (VAGLLFLMTGIFCTISLCTYA). Residues 230–257 (ASVSYDLNRVPKLIYSLPHDVEHGYSWS) lie on the Extracellular side of the membrane. Residues 258-278 (IFCAWCSLGFIVAAGGLCIAY) traverse the membrane as a helical segment. Residues 279–297 (PFISRTKIAHLKSGRDSTV) lie on the Cytoplasmic side of the membrane.

Belongs to the TMEM178 family. Interacts with STIM1.

The protein resides in the endoplasmic reticulum membrane. Its function is as follows. Acts as a negative regulator of osteoclast differentiation in basal and inflammatory conditions by regulating TNFSF11-induced Ca (2+) fluxes, thereby controlling the induction of NFATC1. The polypeptide is Transmembrane protein 178A (Tmem178a) (Rattus norvegicus (Rat)).